Here is a 428-residue protein sequence, read N- to C-terminus: Neuraminidase (428 aa).

At methionine 1–lysine 6 the chain is on the intravirion side. A helical transmembrane segment spans residues isoleucine 7–glycine 27. Residues glycine 11–tryptophan 33 form an involved in apical transport and lipid raft association region. At asparagine 28 to arginine 428 the chain is on the virion surface side. The segment at histidine 36–serine 90 is hypervariable stalk region. N-linked (GlcNAc...) asparagine; by host glycosylation is found at asparagine 50, asparagine 58, asparagine 63, asparagine 68, and asparagine 88. A head of neuraminidase region spans residues leucine 91 to arginine 428. 7 disulfide bridges follow: cysteine 92/cysteine 417, cysteine 124/cysteine 129, cysteine 184/cysteine 231, cysteine 233/cysteine 238, cysteine 279/cysteine 292, cysteine 281/cysteine 290, and cysteine 318/cysteine 335. Residue arginine 118 coordinates substrate. Asparagine 146 carries N-linked (GlcNAc...) asparagine; by host glycosylation. Residue aspartate 151 is the Proton donor/acceptor of the active site. Arginine 152 serves as a coordination point for substrate. N-linked (GlcNAc...) asparagine; by host glycosylation is present at asparagine 235. Glutamate 277 to glutamate 278 is a binding site for substrate. Residue arginine 293 participates in substrate binding. Ca(2+) is bound by residues aspartate 294, glycine 298, and aspartate 324. Arginine 368 contacts substrate. An N-linked (GlcNAc...) asparagine; by host glycan is attached at asparagine 386. Tyrosine 402 acts as the Nucleophile in catalysis.

This sequence belongs to the glycosyl hydrolase 34 family. Homotetramer. Ca(2+) is required as a cofactor. In terms of processing, N-glycosylated.

Its subcellular location is the virion membrane. The protein resides in the host apical cell membrane. The catalysed reaction is Hydrolysis of alpha-(2-&gt;3)-, alpha-(2-&gt;6)-, alpha-(2-&gt;8)- glycosidic linkages of terminal sialic acid residues in oligosaccharides, glycoproteins, glycolipids, colominic acid and synthetic substrates.. With respect to regulation, inhibited by the neuraminidase inhibitors zanamivir (Relenza) and oseltamivir (Tamiflu). These drugs interfere with the release of progeny virus from infected cells and are effective against all influenza strains. Resistance to neuraminidase inhibitors is quite rare. Functionally, catalyzes the removal of terminal sialic acid residues from viral and cellular glycoconjugates. Cleaves off the terminal sialic acids on the glycosylated HA during virus budding to facilitate virus release. Additionally helps virus spread through the circulation by further removing sialic acids from the cell surface. These cleavages prevent self-aggregation and ensure the efficient spread of the progeny virus from cell to cell. Otherwise, infection would be limited to one round of replication. Described as a receptor-destroying enzyme because it cleaves a terminal sialic acid from the cellular receptors. May facilitate viral invasion of the upper airways by cleaving the sialic acid moieties on the mucin of the airway epithelial cells. Likely to plays a role in the budding process through its association with lipid rafts during intracellular transport. May additionally display a raft-association independent effect on budding. Plays a role in the determination of host range restriction on replication and virulence. Sialidase activity in late endosome/lysosome traffic seems to enhance virus replication. The protein is Neuraminidase of Aves (Cat).